A 31-amino-acid polypeptide reads, in one-letter code: Maltose/maltodextrin import ATP-binding protein MalK (31 aa).

This sequence belongs to the ABC transporter superfamily. Maltooligosaccharide importer (TC 3.A.1.1.1) family. The complex is composed of two ATP-binding proteins (MalK), two transmembrane proteins (MalG and MalK) and a solute-binding protein (MalE).

It is found in the cell inner membrane. The enzyme catalyses D-maltose(out) + ATP + H2O = D-maltose(in) + ADP + phosphate + H(+). In terms of biological role, part of the ABC transporter complex MalEFGK involved in maltose/maltodextrin import. Responsible for energy coupling to the transport system. This Photorhabdus luminescens (Xenorhabdus luminescens) protein is Maltose/maltodextrin import ATP-binding protein MalK.